Here is a 162-residue protein sequence, read N- to C-terminus: NADH-quinone oxidoreductase subunit C (162 aa).

This sequence belongs to the complex I 30 kDa subunit family. NDH-1 is composed of 14 different subunits. Subunits NuoB, C, D, E, F, and G constitute the peripheral sector of the complex.

The protein localises to the cell inner membrane. The enzyme catalyses a quinone + NADH + 5 H(+)(in) = a quinol + NAD(+) + 4 H(+)(out). Its function is as follows. NDH-1 shuttles electrons from NADH, via FMN and iron-sulfur (Fe-S) centers, to quinones in the respiratory chain. The immediate electron acceptor for the enzyme in this species is believed to be ubiquinone. Couples the redox reaction to proton translocation (for every two electrons transferred, four hydrogen ions are translocated across the cytoplasmic membrane), and thus conserves the redox energy in a proton gradient. The polypeptide is NADH-quinone oxidoreductase subunit C (Geobacter metallireducens (strain ATCC 53774 / DSM 7210 / GS-15)).